The chain runs to 322 residues: HPr kinase/phosphorylase (322 aa).

Catalysis depends on residues H153 and K174. Position 168–175 (168–175) interacts with ATP; the sequence is GRSGLGKS. A Mg(2+)-binding site is contributed by S175. The active-site Proton acceptor; for phosphorylation activity. Proton donor; for dephosphorylation activity is the D192. An important for the catalytic mechanism of both phosphorylation and dephosphorylation region spans residues 217-226; the sequence is MEIRGLGVVD. Residue E218 participates in Mg(2+) binding. Residue R259 is part of the active site. Positions 280 to 285 are important for the catalytic mechanism of dephosphorylation; that stretch reads PIFPGK.

The protein belongs to the HPrK/P family. In terms of assembly, homohexamer. Mg(2+) is required as a cofactor.

It carries out the reaction [HPr protein]-L-serine + ATP = [HPr protein]-O-phospho-L-serine + ADP + H(+). It catalyses the reaction [HPr protein]-O-phospho-L-serine + phosphate + H(+) = [HPr protein]-L-serine + diphosphate. Functionally, catalyzes the ATP- as well as the pyrophosphate-dependent phosphorylation of a specific serine residue in HPr, a phosphocarrier protein of the phosphoenolpyruvate-dependent sugar phosphotransferase system (PTS). HprK/P also catalyzes the pyrophosphate-producing, inorganic phosphate-dependent dephosphorylation (phosphorolysis) of seryl-phosphorylated HPr (P-Ser-HPr). This Chlorobium phaeobacteroides (strain DSM 266 / SMG 266 / 2430) protein is HPr kinase/phosphorylase.